Reading from the N-terminus, the 854-residue chain is Armadillo repeat-containing protein 2 (854 aa).

3 disordered regions span residues 1-116, 140-194, and 206-255; these read MLSS…SFPK, QGML…PLLT, and EVSL…ETDT. The span at 58 to 73 shows a compositional bias: low complexity; the sequence is PASSRSPENRPPSSFS. Composition is skewed to polar residues over residues 74-87 and 162-187; these read LHASSFELSDSKPI and KPVSVGSSTARRNGTHLTASSATGQL. 12 ARM repeats span residues 255–294, 298–337, 356–396, 401–442, 455–496, 499–540, 544–583, 585–605, 606–649, 651–692, 694–733, and 735–777; these read TEVDEVFWKARIVPILHELENEEDIEEMCAACTQLHRTLE, MLGKKFKRRTVLLKALYKLVDADSDPLSLKLAKLILALKV, EKND…ALKF, PGFL…HLLV, PLTR…KLTS, DCCA…NLTA, QARELFSRETGSVETLLTLFQSFYHHKENSPKLQLSEAKP, AEAEDVLVKLTRVLANIAIHP, RIGP…NLSF, QVKS…NLSQ, HDVCNFLMQKNVHKFMITLLEAKHQDICFSACGVLLNLTV, and KEKR…NFSE.

Functionally, required for sperm flagellum axoneme organization and function. Involved in axonemal central pair complex assembly and/or stability. The polypeptide is Armadillo repeat-containing protein 2 (Mus musculus (Mouse)).